A 614-amino-acid polypeptide reads, in one-letter code: Zinc metalloproteinase-disintegrin-like VLAIP-B (614 aa).

Residues 1-20 form the signal peptide; that stretch reads MMQVLLVTICLAVFPYQGSS. Positions 21-193 are excised as a propeptide; the sequence is IILESGNVND…KASQLNLTPE (173 aa). Gln-194 is subject to Pyrrolidone carboxylic acid. Residues 202-398 form the Peptidase M12B domain; sequence KYVELVIVAD…KMPQCILNKP (197 aa). Residue Glu-205 participates in Ca(2+) binding. Asn-262 is a glycosylation site (N-linked (GlcNAc...) asparagine). Asp-289 is a binding site for Ca(2+). 3 cysteine pairs are disulfide-bonded: Cys-313–Cys-393, Cys-353–Cys-377, and Cys-355–Cys-360. His-338 is a binding site for Zn(2+). Residue Glu-339 is part of the active site. Zn(2+) is bound by residues His-342 and His-348. Ca(2+)-binding residues include Cys-393, Asn-396, Val-408, Asn-411, Phe-413, Glu-415, Glu-418, and Asp-421. In terms of domain architecture, Disintegrin spans 406 to 492; sequence PAVCGNYFVE…ECPTDQFQRN (87 aa). 14 cysteine pairs are disulfide-bonded: Cys-409/Cys-438, Cys-420/Cys-433, Cys-422/Cys-428, Cys-432/Cys-455, Cys-446/Cys-452, Cys-451/Cys-477, Cys-464/Cys-484, Cys-471/Cys-503, Cys-496/Cys-508, Cys-515/Cys-565, Cys-530/Cys-576, Cys-543/Cys-553, Cys-560/Cys-602, and Cys-596/Cys-607. The D/ECD-tripeptide signature appears at 470–472; it reads ECD. Asn-505, Asn-547, and Asn-568 each carry an N-linked (GlcNAc...) asparagine glycan.

This sequence belongs to the venom metalloproteinase (M12B) family. P-III subfamily. P-IIIc sub-subfamily. Heterodimer; disulfide-linked. The cofactor is Zn(2+). The N-terminus is blocked. As to expression, expressed by the venom gland.

Its subcellular location is the secreted. Its activity is regulated as follows. Inhibited by EDTA or 1,10-phenanthroline. Not inhibited by PMSF. Functionally, this metalloproteinase hydrolyzes azocasein, and insulin B-chain (at the '38-Ala-|-Leu-39' bond). Also hydrolyzes the Aalpha-chain (FGA) and more slowly the Bbeta-chain of fibrinogen (FGB), without affecting the gamma-chain. Cleaves alpha-chain of fibrinogen at '432-Lys-|-Leu-433' and '535-Pro-|-Met-536' bonds. Does not cleave fibrin. Inhibits endothelial cell adhesion to extracellular matrix proteins such as fibrinogen, fibronectin, vitronectin, collagen I, and collagen IV. Induces apoptosis in vascular endothelial cells. The chain is Zinc metalloproteinase-disintegrin-like VLAIP-B from Macrovipera lebetinus (Levantine viper).